The chain runs to 125 residues: Large ribosomal subunit protein bL12 (125 aa).

The protein belongs to the bacterial ribosomal protein bL12 family. In terms of assembly, homodimer. Part of the ribosomal stalk of the 50S ribosomal subunit. Forms a multimeric L10(L12)X complex, where L10 forms an elongated spine to which 2 to 4 L12 dimers bind in a sequential fashion. Binds GTP-bound translation factors.

In terms of biological role, forms part of the ribosomal stalk which helps the ribosome interact with GTP-bound translation factors. Is thus essential for accurate translation. The chain is Large ribosomal subunit protein bL12 from Hyphomonas neptunium (strain ATCC 15444).